The chain runs to 70 residues: ATP synthase subunit c (70 aa).

2 consecutive transmembrane segments (helical) span residues 4 to 24 (IAAGIAAGLAAVGAGVGNGLV) and 47 to 67 (FLGVGLIEALPILSIVIAFLV).

It belongs to the ATPase C chain family. F-type ATPases have 2 components, F(1) - the catalytic core - and F(0) - the membrane proton channel. F(1) has five subunits: alpha(3), beta(3), gamma(1), delta(1), epsilon(1). F(0) has three main subunits: a(1), b(2) and c(10-14). The alpha and beta chains form an alternating ring which encloses part of the gamma chain. F(1) is attached to F(0) by a central stalk formed by the gamma and epsilon chains, while a peripheral stalk is formed by the delta and b chains.

It is found in the cell membrane. In terms of biological role, f(1)F(0) ATP synthase produces ATP from ADP in the presence of a proton or sodium gradient. F-type ATPases consist of two structural domains, F(1) containing the extramembraneous catalytic core and F(0) containing the membrane proton channel, linked together by a central stalk and a peripheral stalk. During catalysis, ATP synthesis in the catalytic domain of F(1) is coupled via a rotary mechanism of the central stalk subunits to proton translocation. Key component of the F(0) channel; it plays a direct role in translocation across the membrane. A homomeric c-ring of between 10-14 subunits forms the central stalk rotor element with the F(1) delta and epsilon subunits. This chain is ATP synthase subunit c, found in Limosilactobacillus fermentum (strain NBRC 3956 / LMG 18251) (Lactobacillus fermentum).